The primary structure comprises 89 residues: Small ribosomal subunit protein uS15 (89 aa).

This sequence belongs to the universal ribosomal protein uS15 family. As to quaternary structure, part of the 30S ribosomal subunit. Forms a bridge to the 50S subunit in the 70S ribosome, contacting the 23S rRNA.

In terms of biological role, one of the primary rRNA binding proteins, it binds directly to 16S rRNA where it helps nucleate assembly of the platform of the 30S subunit by binding and bridging several RNA helices of the 16S rRNA. Forms an intersubunit bridge (bridge B4) with the 23S rRNA of the 50S subunit in the ribosome. The polypeptide is Small ribosomal subunit protein uS15 (Azobacteroides pseudotrichonymphae genomovar. CFP2).